A 163-amino-acid polypeptide reads, in one-letter code: Phosphopantetheine adenylyltransferase (163 aa).

Residue Ser11 coordinates substrate. ATP is bound by residues 11–12 (SF) and His19. Positions 43, 76, and 90 each coordinate substrate. ATP contacts are provided by residues 91 to 93 (GLR), Glu101, and 126 to 132 (WQALSSS).

Belongs to the bacterial CoaD family. As to quaternary structure, homohexamer. It depends on Mg(2+) as a cofactor.

The protein localises to the cytoplasm. It carries out the reaction (R)-4'-phosphopantetheine + ATP + H(+) = 3'-dephospho-CoA + diphosphate. The protein operates within cofactor biosynthesis; coenzyme A biosynthesis; CoA from (R)-pantothenate: step 4/5. Its function is as follows. Reversibly transfers an adenylyl group from ATP to 4'-phosphopantetheine, yielding dephospho-CoA (dPCoA) and pyrophosphate. The chain is Phosphopantetheine adenylyltransferase from Streptococcus pyogenes serotype M6 (strain ATCC BAA-946 / MGAS10394).